The primary structure comprises 285 residues: Undecaprenyl-diphosphatase (285 aa).

A run of 7 helical transmembrane segments spans residues 40-60 (GPLI…VYFF), 89-109 (LFWW…AIKL), 137-157 (DLIA…DWLG), 171-191 (GLIV…RSGV), 209-229 (FSFL…VPEI), 241-261 (LIAG…LMNF), and 265-285 (ASML…LAFF).

It belongs to the UppP family.

It is found in the cell inner membrane. It catalyses the reaction di-trans,octa-cis-undecaprenyl diphosphate + H2O = di-trans,octa-cis-undecaprenyl phosphate + phosphate + H(+). In terms of biological role, catalyzes the dephosphorylation of undecaprenyl diphosphate (UPP). Confers resistance to bacitracin. This Erythrobacter litoralis (strain HTCC2594) protein is Undecaprenyl-diphosphatase.